Consider the following 492-residue polypeptide: Probable endopolygalacturonase D (492 aa).

Positions 1-16 (MKRSALILSFLPLVFG) are cleaved as a signal peptide. Residues Cys151 and Cys166 are joined by a disulfide bond. PbH1 repeat units follow at residues 216–238 (GTSVTITGVEGHVIDGNGAAYWD), 258–280 (MYNSRIENLYIQNWPVHCFEIES), 281–319 (TEHLTVSGLTLNNSAGDAANSKSDGDPAAHNSDGFDIKE), and 320–341 (SSYFTLENTWVHNQDDCVAVTS). N-linked (GlcNAc...) asparagine glycosylation is present at Asn292. The active-site Proton donor is the Asp334. The cysteines at positions 336 and 352 are disulfide-linked. The active site involves His356. PbH1 repeat units follow at residues 371–392 (VNGVTFSNSQVISSQNGCRIKT), 400–422 (VYNIRYENITLSDISDYGIDVQQ), and 434–478 (TNGV…SITG). 2 N-linked (GlcNAc...) asparagine glycosylation sites follow: Asn407 and Asn441. Intrachain disulfides connect Cys461–Cys466 and Cys484–Cys491.

It belongs to the glycosyl hydrolase 28 family.

Its subcellular location is the secreted. It catalyses the reaction (1,4-alpha-D-galacturonosyl)n+m + H2O = (1,4-alpha-D-galacturonosyl)n + (1,4-alpha-D-galacturonosyl)m.. In terms of biological role, involved in maceration and soft-rotting of plant tissue. Hydrolyzes the 1,4-alpha glycosidic bonds of de-esterified pectate in the smooth region of the plant cell wall. The polypeptide is Probable endopolygalacturonase D (pgaD) (Aspergillus flavus (strain ATCC 200026 / FGSC A1120 / IAM 13836 / NRRL 3357 / JCM 12722 / SRRC 167)).